A 431-amino-acid chain; its full sequence is Beta-lactamase hydrolase-like protein (431 aa).

Residues H212, H214, and H286 each coordinate Zn(2+). A substrate-binding site is contributed by D309.

This sequence belongs to the metallo-beta-lactamase superfamily. The cofactor is Zn(2+).

Could play a role in cell adherence or biofilm development. The chain is Beta-lactamase hydrolase-like protein from Xylella fastidiosa (strain 9a5c).